The primary structure comprises 218 residues: MEAEGCRYQFRVALLGDAAVGKTSLLRSYVAGAPGAPEPEPEPEPTVGAECYRRALQLRAGPRVKLQLWDTAGHERFRCITRSFYRNVVGVLLVFDVTNRKSFEHIQDWHQEVMATQGPDKVIFLLVGHKSDLQSTRCVSAQEAEELAASLGMAFVETSVKNNCNVDLAFDTLADAIQQALQQGDIKLEEGWGGVRLIHKTQIPRSPSRKQHSGPCQC.

Residues A19, G21, K22, T23, and T46 each contribute to the GTP site. Mg(2+)-binding residues include T23, T46, and D70. GTP-binding residues include G73, K130, D132, V160, and K161. Residues C216 and C218 are each lipidated (S-geranylgeranyl cysteine).

It belongs to the small GTPase superfamily. Rab family. Requires Mg(2+) as cofactor.

The protein localises to the membrane. The catalysed reaction is GTP + H2O = GDP + phosphate + H(+). Its activity is regulated as follows. Regulated by guanine nucleotide exchange factors (GEFs) which promote the exchange of bound GDP for free GTP. Regulated by GTPase activating proteins (GAPs) which increase the GTP hydrolysis activity. Inhibited by GDP dissociation inhibitors (GDIs). The small GTPases Rab are key regulators of intracellular membrane trafficking, from the formation of transport vesicles to their fusion with membranes. Rabs cycle between an inactive GDP-bound form and an active GTP-bound form that is able to recruit to membranes different sets of downstream effectors directly responsible for vesicle formation, movement, tethering and fusion. The physiological function of RAB42 remains undefined. This chain is Ras-related protein Rab-42, found in Homo sapiens (Human).